The sequence spans 510 residues: Bifunctional purine biosynthesis protein PurH (510 aa).

In terms of domain architecture, MGS-like spans 1 to 142; the sequence is MRALISVSDK…KNFKDVLIVT (142 aa).

It belongs to the PurH family.

It carries out the reaction (6R)-10-formyltetrahydrofolate + 5-amino-1-(5-phospho-beta-D-ribosyl)imidazole-4-carboxamide = 5-formamido-1-(5-phospho-D-ribosyl)imidazole-4-carboxamide + (6S)-5,6,7,8-tetrahydrofolate. The catalysed reaction is IMP + H2O = 5-formamido-1-(5-phospho-D-ribosyl)imidazole-4-carboxamide. It functions in the pathway purine metabolism; IMP biosynthesis via de novo pathway; 5-formamido-1-(5-phospho-D-ribosyl)imidazole-4-carboxamide from 5-amino-1-(5-phospho-D-ribosyl)imidazole-4-carboxamide (10-formyl THF route): step 1/1. Its pathway is purine metabolism; IMP biosynthesis via de novo pathway; IMP from 5-formamido-1-(5-phospho-D-ribosyl)imidazole-4-carboxamide: step 1/1. The polypeptide is Bifunctional purine biosynthesis protein PurH (Campylobacter curvus (strain 525.92)).